We begin with the raw amino-acid sequence, 83 residues long: Exodeoxyribonuclease 7 small subunit (83 aa).

The protein belongs to the XseB family. As to quaternary structure, heterooligomer composed of large and small subunits.

It localises to the cytoplasm. The enzyme catalyses Exonucleolytic cleavage in either 5'- to 3'- or 3'- to 5'-direction to yield nucleoside 5'-phosphates.. In terms of biological role, bidirectionally degrades single-stranded DNA into large acid-insoluble oligonucleotides, which are then degraded further into small acid-soluble oligonucleotides. This Nitrobacter winogradskyi (strain ATCC 25391 / DSM 10237 / CIP 104748 / NCIMB 11846 / Nb-255) protein is Exodeoxyribonuclease 7 small subunit.